Here is a 406-residue protein sequence, read N- to C-terminus: Succinylornithine transaminase (406 aa).

An N6-(pyridoxal phosphate)lysine modification is found at Lys-252.

It belongs to the class-III pyridoxal-phosphate-dependent aminotransferase family. AstC subfamily. It depends on pyridoxal 5'-phosphate as a cofactor.

It carries out the reaction N(2)-succinyl-L-ornithine + 2-oxoglutarate = N-succinyl-L-glutamate 5-semialdehyde + L-glutamate. Its pathway is amino-acid degradation; L-arginine degradation via AST pathway; L-glutamate and succinate from L-arginine: step 3/5. Functionally, catalyzes the transamination of N(2)-succinylornithine and alpha-ketoglutarate into N(2)-succinylglutamate semialdehyde and glutamate. Can also act as an acetylornithine aminotransferase. In Escherichia coli O17:K52:H18 (strain UMN026 / ExPEC), this protein is Succinylornithine transaminase.